The following is a 155-amino-acid chain: 6,7-dimethyl-8-ribityllumazine synthase (155 aa).

5-amino-6-(D-ribitylamino)uracil contacts are provided by residues F22, A56–E58, and A80–I82. S85 to T86 contributes to the (2S)-2-hydroxy-3-oxobutyl phosphate binding site. H88 functions as the Proton donor in the catalytic mechanism. F113 lines the 5-amino-6-(D-ribitylamino)uracil pocket. R127 is a (2S)-2-hydroxy-3-oxobutyl phosphate binding site.

This sequence belongs to the DMRL synthase family.

The enzyme catalyses (2S)-2-hydroxy-3-oxobutyl phosphate + 5-amino-6-(D-ribitylamino)uracil = 6,7-dimethyl-8-(1-D-ribityl)lumazine + phosphate + 2 H2O + H(+). Its pathway is cofactor biosynthesis; riboflavin biosynthesis; riboflavin from 2-hydroxy-3-oxobutyl phosphate and 5-amino-6-(D-ribitylamino)uracil: step 1/2. Catalyzes the formation of 6,7-dimethyl-8-ribityllumazine by condensation of 5-amino-6-(D-ribitylamino)uracil with 3,4-dihydroxy-2-butanone 4-phosphate. This is the penultimate step in the biosynthesis of riboflavin. This Bifidobacterium longum subsp. infantis (strain ATCC 15697 / DSM 20088 / JCM 1222 / NCTC 11817 / S12) protein is 6,7-dimethyl-8-ribityllumazine synthase.